The following is a 521-amino-acid chain: CD166 antigen (521 aa).

Residues 1-465 (GSPVFIAFRS…NREKVNDQAK (465 aa)) lie on the Extracellular side of the membrane. N-linked (GlcNAc...) asparagine glycosylation is found at N29, N33, N105, N203, N244, N299, N395, N418, and N437. One can recognise an Ig-like V-type 2 domain in the interval 63–172 (PTVVKVFKQP…YGPSGQKTVH (110 aa)). Residues C95 and C158 are joined by a disulfide bond. Ig-like C2-type domains are found at residues 183 to 266 (PTEQ…TAIT), 271 to 347 (DLSL…ESLT), and 354 to 439 (PQIK…LNVS). 3 disulfide bridges follow: C208/C251, C292/C330, and C373/C423. A helical transmembrane segment spans residues 466–487 (LIVGIVVGLLLAALVAGVVYWL). Residues 488–521 (YMKKSKTASKHVNKDLGNMEENKKLEENNHKTEA) lie on the Cytoplasmic side of the membrane. The segment at 500–521 (NKDLGNMEENKKLEENNHKTEA) is disordered. Residues 507-521 (EENKKLEENNHKTEA) show a composition bias toward basic and acidic residues.

In terms of assembly, homodimer. Interacts (via extracellular domain) with CD6 (via extracellular domain). Homodimerization and interaction with CD6 involve the same region and cannot occur simultaneously. The affinity for CD6 is much higher than the affinity for self-association. Interacts (via glycosylated extracellular domain) with LGALS1 and LGALS3. Interaction with LGALS1 or LGALS3 inhibits interaction with CD6. Glycosylated.

The protein localises to the cell membrane. It is found in the cell projection. The protein resides in the axon. Its subcellular location is the dendrite. Its function is as follows. Cell adhesion molecule that mediates both heterotypic cell-cell contacts via its interaction with CD6, as well as homotypic cell-cell contacts. Promotes T-cell activation and proliferation via its interactions with CD6. Contributes to the formation and maturation of the immunological synapse via its interactions with CD6. Mediates homotypic interactions with cells that express ALCAM. Mediates attachment of dendritic cells onto endothelial cells via homotypic interaction. Inhibits endothelial cell migration and promotes endothelial tube formation via homotypic interactions. Required for normal organization of the lymph vessel network. Required for normal hematopoietic stem cell engraftment in the bone marrow. Plays a role in hematopoiesis; required for normal numbers of hematopoietic stem cells in bone marrow. Promotes in vitro osteoblast proliferation and differentiation. Promotes neurite extension, axon growth and axon guidance; axons grow preferentially on surfaces that contain ALCAM. Mediates outgrowth and pathfinding for retinal ganglion cell axons. The polypeptide is CD166 antigen (ALCAM) (Oryctolagus cuniculus (Rabbit)).